The following is a 198-amino-acid chain: Ras-like protein 2 (198 aa).

Glycine 18 to serine 25 serves as a coordination point for GTP. The short motif at tyrosine 40–tyrosine 48 is the Effector region element. Residues aspartate 65–glutamine 69 and asparagine 124–aspartate 127 contribute to the GTP site. Position 195 is a cysteine methyl ester (cysteine 195). A lipid anchor (S-farnesyl cysteine) is attached at cysteine 195. Residues isoleucine 196–methionine 198 constitute a propeptide, removed in mature form.

The protein belongs to the small GTPase superfamily. Ras family.

Its subcellular location is the cell membrane. It carries out the reaction GTP + H2O = GDP + phosphate + H(+). Its activity is regulated as follows. Alternates between an inactive form bound to GDP and an active form bound to GTP. Activated by a guanine nucleotide-exchange factor (GEF) and inactivated by a GTPase-activating protein (GAP). This is Ras-like protein 2 (RAS2) from Mucor circinelloides f. lusitanicus (Mucor racemosus var. lusitanicus).